The chain runs to 237 residues: Probable transcriptional regulatory protein WS1016 (237 aa).

The protein belongs to the TACO1 family.

The protein resides in the cytoplasm. The chain is Probable transcriptional regulatory protein WS1016 from Wolinella succinogenes (strain ATCC 29543 / DSM 1740 / CCUG 13145 / JCM 31913 / LMG 7466 / NCTC 11488 / FDC 602W) (Vibrio succinogenes).